The following is a 213-amino-acid chain: MMPDQPATACPLVLASASPRRAALLAQIGVIPALTLATDIDETPLKGEVPLKGEVPRLLSRRLAQGKADTAIRVLREQSDAPLAAPFILAADTVVAVGRRALPKAETEAEARQCLTLLSGRRHHVWTTVVVIAPDGKRAERIVESAVTFNRMTDLQQEAYIASGEWRGKAGGYAIQGLAAAYIRFLSGSYSNVVGLPLFETAQLLRGLGFRSL.

Residue Asp-92 is the Proton acceptor of the active site.

The protein belongs to the Maf family. YhdE subfamily. It depends on a divalent metal cation as a cofactor.

It localises to the cytoplasm. It catalyses the reaction dTTP + H2O = dTMP + diphosphate + H(+). The catalysed reaction is UTP + H2O = UMP + diphosphate + H(+). Functionally, nucleoside triphosphate pyrophosphatase that hydrolyzes dTTP and UTP. May have a dual role in cell division arrest and in preventing the incorporation of modified nucleotides into cellular nucleic acids. The polypeptide is dTTP/UTP pyrophosphatase (Granulibacter bethesdensis (strain ATCC BAA-1260 / CGDNIH1)).